The primary structure comprises 58 residues: Small ribosomal subunit protein bS21 (58 aa).

Residues 32–42 (IRKREHYEKPS) are compositionally biased toward basic and acidic residues. The interval 32 to 58 (IRKREHYEKPSVKRKKKSEAARKRKFK) is disordered. Over residues 43 to 58 (VKRKKKSEAARKRKFK) the composition is skewed to basic residues.

It belongs to the bacterial ribosomal protein bS21 family.

This chain is Small ribosomal subunit protein bS21, found in Lachnoclostridium phytofermentans (strain ATCC 700394 / DSM 18823 / ISDg) (Clostridium phytofermentans).